We begin with the raw amino-acid sequence, 87 residues long: Phosphoribosyl-ATP pyrophosphatase (87 aa).

It belongs to the PRA-PH family.

Its subcellular location is the cytoplasm. It carries out the reaction 1-(5-phospho-beta-D-ribosyl)-ATP + H2O = 1-(5-phospho-beta-D-ribosyl)-5'-AMP + diphosphate + H(+). It functions in the pathway amino-acid biosynthesis; L-histidine biosynthesis; L-histidine from 5-phospho-alpha-D-ribose 1-diphosphate: step 2/9. The sequence is that of Phosphoribosyl-ATP pyrophosphatase from Clavibacter sepedonicus (Clavibacter michiganensis subsp. sepedonicus).